The primary structure comprises 361 residues: P2Y purinoceptor 4 (361 aa).

Residues 1–20 are disordered; sequence MTSAESLLFTSLGPSPSSGD. Topologically, residues 1–30 are extracellular; sequence MTSAESLLFTSLGPSPSSGDGDCRFNEEFK. A helical transmembrane segment spans residues 31–58; that stretch reads FILLPMSYAVVFVLGLALNAPTLWLFLF. At 59-68 the chain is on the cytoplasmic side; that stretch reads RLRPWDATAT. The chain crosses the membrane as a helical span at residues 69–91; sequence YMFHLALSDTLYVLSLPTLVYYY. The Extracellular segment spans residues 92–108; that stretch reads AARNHWPFGTGLCKFVR. A disulfide bond links C104 and C181. The chain crosses the membrane as a helical span at residues 109-127; the sequence is FLFYWNLYCSVLFLTCISV. Residues 128 to 149 are Cytoplasmic-facing; sequence HRYLGICHPLRAIRWGRPRFAS. The chain crosses the membrane as a helical span at residues 150 to 170; that stretch reads LLCLGVWLVVAGCLVPNLFFV. Residues 171-192 lie on the Extracellular side of the membrane; sequence TTNANGTTILCHDTTLPEEFDH. A glycan (N-linked (GlcNAc...) asparagine) is linked at N175. The chain crosses the membrane as a helical span at residues 193-218; it reads YVYFSSAVMVLLFGLPFLITLVCYGL. Topologically, residues 219-242 are cytoplasmic; that stretch reads MARRLYRPLPGAGQSSSRLRSLRT. Residues 243–265 form a helical membrane-spanning segment; it reads IAVVLTVFAVCFVPFHITRTIYY. The Extracellular segment spans residues 266–283; sequence QARLLQADCHVLNIVNVV. Residues 284 to 305 traverse the membrane as a helical segment; the sequence is YKVTRPLASANSCLDPVLYLFT. The Cytoplasmic portion of the chain corresponds to 306-361; it reads GDKYRNQLQQLCRGSKPKPRTAASSLALVTLHEESISRWADTHQDSTFSAYEGDRL.

Belongs to the G-protein coupled receptor 1 family. In terms of processing, phosphorylation of Ser-329 and Ser-330 is a key step in agonist-dependent desensitization and loss of surface P2RY4. This phosphorylation does not involve PKC, nor other calcium-activated kinases. Widely expressed at low levels. In brain, higher expression in the pineal gland and ventricular system.

It is found in the cell membrane. Receptor for ATP and UTP coupled to G-proteins that activate a phosphatidylinositol-calcium second messenger system. Not activated by ADP or UDP. The chain is P2Y purinoceptor 4 (P2ry4) from Rattus norvegicus (Rat).